The sequence spans 728 residues: Catalase-peroxidase (728 aa).

A cross-link (tryptophyl-tyrosyl-methioninium (Trp-Tyr) (with M-251)) is located at residues 97-225 (WHSAGTYRIA…LAAVMMGLIY (129 aa)). His-98 serves as the catalytic Proton acceptor. A cross-link (tryptophyl-tyrosyl-methioninium (Tyr-Met) (with W-97)) is located at residues 225 to 251 (YVNPEGVDGNPDPLRTAQDIRITFARM). His-266 lines the heme b pocket.

The protein belongs to the peroxidase family. Peroxidase/catalase subfamily. Homodimer or homotetramer. Heme b serves as cofactor. In terms of processing, formation of the three residue Trp-Tyr-Met cross-link is important for the catalase, but not the peroxidase activity of the enzyme.

The enzyme catalyses H2O2 + AH2 = A + 2 H2O. The catalysed reaction is 2 H2O2 = O2 + 2 H2O. Functionally, bifunctional enzyme with both catalase and broad-spectrum peroxidase activity. This Shewanella putrefaciens (strain CN-32 / ATCC BAA-453) protein is Catalase-peroxidase.